The chain runs to 241 residues: Tetraspanin-1 (241 aa).

At 1–11 (MQCFSFIKTMM) the chain is on the cytoplasmic side. A helical membrane pass occupies residues 12–34 (ILFNLLIFLCGAALLAVGIWVSI). Over 35–53 (DGASFLKIFGPLSSSAMQF) the chain is Extracellular. The helical transmembrane segment at 54–76 (VNVGYFLIAAGVVVFALGFLGCY) threads the bilayer. Residues 77–88 (GAKTESKCALMT) lie on the Cytoplasmic side of the membrane. The helical transmembrane segment at 89–111 (FFFILLLIFIAEVAAAVVALVYT) threads the bilayer. The Extracellular segment spans residues 112–214 (TMAEHFLTLL…LYDIRTNAVT (103 aa)). Asparagine 141, asparagine 154, asparagine 178, and asparagine 184 each carry an N-linked (GlcNAc...) asparagine glycan. A helical transmembrane segment spans residues 215–237 (VGGVAAGIGGLELAAMIVSMYLY). Over 238–241 (CNLQ) the chain is Cytoplasmic.

Belongs to the tetraspanin (TM4SF) family. In terms of assembly, interacts with SLC19A2. Interacts with NTRK1/TRKA.

Its subcellular location is the lysosome membrane. In terms of biological role, structural component of specialized membrane microdomains known as tetraspanin-enriched microdomains (TERMs), which act as platforms for receptor clustering and signaling. Participates thereby in diverse biological functions such as cell signal transduction, adhesion, migration and protein trafficking. Regulates neuronal differentiation in response to NGF by facilitating NGF-mediated activation of NTRK1/TRKA receptor tyrosine kinase and subsequent downstream signaling pathways. Plays a role in the inhibition of TNFalpha-induced apoptosis. Mechanistically, inhibits the NF-kappa-B signaling pathway by blocking phosphorylation of CHUK. Also promotes the stability of the thiamine transporter 1/SLC19A2 in intestinal epithelial cells leading to an increase of thiamine uptake process. In Pongo abelii (Sumatran orangutan), this protein is Tetraspanin-1 (TSPAN1).